A 389-amino-acid chain; its full sequence is MVTVEDVRKAQRAEGPATVMAIGTATPPNCVDQSTYPDFYFRITNSEHKAELKEKFQRMCDKSMIKKRYMYLTEEILKENPSVCEYMAPSLDARQDMVVVEVPKLGKEAATKAIKEWGQPKSKITHLVFCTTSGVDMPGADYQLTKLLGLRPSVKRLMMYQQGCFAGGTVLRLAKDLAENNKGARVLVVCSEITAVTFRGPSDTHLDSLVGQALFGDGAAAIIVGADPVPEVEKPLFELVSAAQTILPDSDGAIDGHLREVGLTFHLLKDVPGLISKNIEKALTEAFQPLGISDWNSIFWIAHPGGPAILDQVELKLSLKPEKLRATRHVLSEYGNMSSACVLFILDEMRRKSAEEGLKTTGEGLEWGVLFGFGPGLTVETVVLHSLCT.

Active-site residues include cysteine 164, histidine 303, and asparagine 336.

Belongs to the thiolase-like superfamily. Chalcone/stilbene synthases family. As to quaternary structure, homodimer. In terms of tissue distribution, mainly expressed in flowers, to a lower extent in young leaves, and barely in mature leaves and twigs.

It catalyses the reaction (E)-4-coumaroyl-CoA + 3 malonyl-CoA + 3 H(+) = 2',4,4',6'-tetrahydroxychalcone + 3 CO2 + 4 CoA. It functions in the pathway secondary metabolite biosynthesis; flavonoid biosynthesis. Its function is as follows. The primary product of this enzyme is 4,2',4',6'-tetrahydroxychalcone (also termed naringenin-chalcone or chalcone) which can under specific conditions spontaneously isomerize into naringenin. The protein is Chalcone synthase of Rhododendron dauricum (Azalea daurica).